A 128-amino-acid polypeptide reads, in one-letter code: Glycine cleavage system H protein (128 aa).

The Lipoyl-binding domain occupies 22 to 104; it reads AIVVGITDFA…YEEGWMITIE (83 aa). At Lys63 the chain carries N6-lipoyllysine.

Belongs to the GcvH family. As to quaternary structure, the glycine cleavage system is composed of four proteins: P, T, L and H. Requires (R)-lipoate as cofactor.

The glycine cleavage system catalyzes the degradation of glycine. The H protein shuttles the methylamine group of glycine from the P protein to the T protein. The protein is Glycine cleavage system H protein of Anaeromyxobacter dehalogenans (strain 2CP-1 / ATCC BAA-258).